A 301-amino-acid polypeptide reads, in one-letter code: Ribosomal RNA small subunit methyltransferase A (301 aa).

Positions 23, 25, 50, 72, 97, and 149 each coordinate S-adenosyl-L-methionine.

It belongs to the class I-like SAM-binding methyltransferase superfamily. rRNA adenine N(6)-methyltransferase family. RsmA subfamily.

It localises to the cytoplasm. The catalysed reaction is adenosine(1518)/adenosine(1519) in 16S rRNA + 4 S-adenosyl-L-methionine = N(6)-dimethyladenosine(1518)/N(6)-dimethyladenosine(1519) in 16S rRNA + 4 S-adenosyl-L-homocysteine + 4 H(+). In terms of biological role, specifically dimethylates two adjacent adenosines (A1518 and A1519) in the loop of a conserved hairpin near the 3'-end of 16S rRNA in the 30S particle. May play a critical role in biogenesis of 30S subunits. The sequence is that of Ribosomal RNA small subunit methyltransferase A from Rickettsia conorii (strain ATCC VR-613 / Malish 7).